The following is a 406-amino-acid chain: Tryptophan synthase beta chain (406 aa).

Residue Lys99 is modified to N6-(pyridoxal phosphate)lysine.

This sequence belongs to the TrpB family. In terms of assembly, tetramer of two alpha and two beta chains. It depends on pyridoxal 5'-phosphate as a cofactor.

The catalysed reaction is (1S,2R)-1-C-(indol-3-yl)glycerol 3-phosphate + L-serine = D-glyceraldehyde 3-phosphate + L-tryptophan + H2O. Its pathway is amino-acid biosynthesis; L-tryptophan biosynthesis; L-tryptophan from chorismate: step 5/5. Functionally, the beta subunit is responsible for the synthesis of L-tryptophan from indole and L-serine. The sequence is that of Tryptophan synthase beta chain from Phenylobacterium zucineum (strain HLK1).